The following is an 86-amino-acid chain: Small ribosomal subunit protein uS15 (86 aa).

The span at 1–10 (MSIDTQSIIE) shows a compositional bias: polar residues. Residues 1–21 (MSIDTQSIIENNKRSAHDTGS) are disordered.

Belongs to the universal ribosomal protein uS15 family. As to quaternary structure, part of the 30S ribosomal subunit. Forms a bridge to the 50S subunit in the 70S ribosome, contacting the 23S rRNA.

In terms of biological role, one of the primary rRNA binding proteins, it binds directly to 16S rRNA where it helps nucleate assembly of the platform of the 30S subunit by binding and bridging several RNA helices of the 16S rRNA. Forms an intersubunit bridge (bridge B4) with the 23S rRNA of the 50S subunit in the ribosome. The sequence is that of Small ribosomal subunit protein uS15 from Xylella fastidiosa (strain 9a5c).